The chain runs to 183 residues: ATP synthase subunit b, chloroplastic (183 aa).

The chain crosses the membrane as a helical span at residues 28 to 48 (DIFEANVINILLLLFGLIYVL).

This sequence belongs to the ATPase B chain family. As to quaternary structure, F-type ATPases have 2 components, F(1) - the catalytic core - and F(0) - the membrane proton channel. F(1) has five subunits: alpha(3), beta(3), gamma(1), delta(1), epsilon(1). F(0) has four main subunits: a(1), b(1), b'(1) and c(10-14). The alpha and beta chains form an alternating ring which encloses part of the gamma chain. F(1) is attached to F(0) by a central stalk formed by the gamma and epsilon chains, while a peripheral stalk is formed by the delta, b and b' chains.

The protein resides in the plastid. Its subcellular location is the chloroplast thylakoid membrane. Functionally, f(1)F(0) ATP synthase produces ATP from ADP in the presence of a proton or sodium gradient. F-type ATPases consist of two structural domains, F(1) containing the extramembraneous catalytic core and F(0) containing the membrane proton channel, linked together by a central stalk and a peripheral stalk. During catalysis, ATP synthesis in the catalytic domain of F(1) is coupled via a rotary mechanism of the central stalk subunits to proton translocation. Its function is as follows. Component of the F(0) channel, it forms part of the peripheral stalk, linking F(1) to F(0). In Pyropia yezoensis (Susabi-nori), this protein is ATP synthase subunit b, chloroplastic.